A 333-amino-acid chain; its full sequence is Glycerol-3-phosphate dehydrogenase [NAD(P)+] (333 aa).

The NADPH site is built by Tyr-14, His-34, and Lys-108. Sn-glycerol 3-phosphate-binding residues include Lys-108, Gly-137, and Thr-139. An NADPH-binding site is contributed by Ala-141. The sn-glycerol 3-phosphate site is built by Lys-193, Asp-247, Ser-257, Arg-258, and Asn-259. The active-site Proton acceptor is the Lys-193. Arg-258 contributes to the NADPH binding site. Residues Leu-282 and Glu-284 each contribute to the NADPH site.

It belongs to the NAD-dependent glycerol-3-phosphate dehydrogenase family.

Its subcellular location is the cytoplasm. The catalysed reaction is sn-glycerol 3-phosphate + NAD(+) = dihydroxyacetone phosphate + NADH + H(+). The enzyme catalyses sn-glycerol 3-phosphate + NADP(+) = dihydroxyacetone phosphate + NADPH + H(+). It participates in membrane lipid metabolism; glycerophospholipid metabolism. Its function is as follows. Catalyzes the reduction of the glycolytic intermediate dihydroxyacetone phosphate (DHAP) to sn-glycerol 3-phosphate (G3P), the key precursor for phospholipid synthesis. In Blochmanniella floridana, this protein is Glycerol-3-phosphate dehydrogenase [NAD(P)+].